The chain runs to 204 residues: Holliday junction branch migration complex subunit RuvA (204 aa).

Residues 1–64 (MIGRVTGILV…EDAHLLFGFS (64 aa)) are domain I. The interval 65-143 (HKQDRSLFRE…GLQQTDFFIK (79 aa)) is domain II. A flexible linker region spans residues 144-155 (SSHLPGIKCSKL). The segment at 156–204 (DQSLQLDEAVSALIALGYKPIEAEKMVKKVLKADLTSEQLIREALKAAL) is domain III.

Belongs to the RuvA family. As to quaternary structure, homotetramer. Forms an RuvA(8)-RuvB(12)-Holliday junction (HJ) complex. HJ DNA is sandwiched between 2 RuvA tetramers; dsDNA enters through RuvA and exits via RuvB. An RuvB hexamer assembles on each DNA strand where it exits the tetramer. Each RuvB hexamer is contacted by two RuvA subunits (via domain III) on 2 adjacent RuvB subunits; this complex drives branch migration. In the full resolvosome a probable DNA-RuvA(4)-RuvB(12)-RuvC(2) complex forms which resolves the HJ.

It localises to the cytoplasm. Its function is as follows. The RuvA-RuvB-RuvC complex processes Holliday junction (HJ) DNA during genetic recombination and DNA repair, while the RuvA-RuvB complex plays an important role in the rescue of blocked DNA replication forks via replication fork reversal (RFR). RuvA specifically binds to HJ cruciform DNA, conferring on it an open structure. The RuvB hexamer acts as an ATP-dependent pump, pulling dsDNA into and through the RuvAB complex. HJ branch migration allows RuvC to scan DNA until it finds its consensus sequence, where it cleaves and resolves the cruciform DNA. This Histophilus somni (strain 2336) (Haemophilus somnus) protein is Holliday junction branch migration complex subunit RuvA.